A 287-amino-acid polypeptide reads, in one-letter code: Elongation factor Ts (287 aa).

Positions 80 to 83 are involved in Mg(2+) ion dislocation from EF-Tu; sequence TDFL.

Belongs to the EF-Ts family.

Its subcellular location is the cytoplasm. In terms of biological role, associates with the EF-Tu.GDP complex and induces the exchange of GDP to GTP. It remains bound to the aminoacyl-tRNA.EF-Tu.GTP complex up to the GTP hydrolysis stage on the ribosome. The sequence is that of Elongation factor Ts from Pseudomonas putida (strain ATCC 47054 / DSM 6125 / CFBP 8728 / NCIMB 11950 / KT2440).